A 227-amino-acid chain; its full sequence is Cytochrome c oxidase subunit 2 (227 aa).

At 1–14 the chain is on the mitochondrial intermembrane side; that stretch reads MAYPFQLGLQDATS. A helical membrane pass occupies residues 15 to 45; sequence PIMEELLHFHDHTLMIVFLISSLVLYIISLM. Topologically, residues 46–59 are mitochondrial matrix; sequence LTTKLTHTSTMDAQ. The helical transmembrane segment at 60-87 threads the bilayer; sequence EVETVWTILPAIILILIALPSLRILYMM. Topologically, residues 88 to 227 are mitochondrial intermembrane; sequence DEINNPSLTV…YFETWSALMV (140 aa). Cu cation is bound by residues His161, Cys196, Glu198, Cys200, His204, and Met207. Glu198 is a binding site for Mg(2+). Tyr218 carries the phosphotyrosine modification.

This sequence belongs to the cytochrome c oxidase subunit 2 family. Component of the cytochrome c oxidase (complex IV, CIV), a multisubunit enzyme composed of 14 subunits. The complex is composed of a catalytic core of 3 subunits MT-CO1, MT-CO2 and MT-CO3, encoded in the mitochondrial DNA, and 11 supernumerary subunits COX4I, COX5A, COX5B, COX6A, COX6B, COX6C, COX7A, COX7B, COX7C, COX8 and NDUFA4, which are encoded in the nuclear genome. The complex exists as a monomer or a dimer and forms supercomplexes (SCs) in the inner mitochondrial membrane with NADH-ubiquinone oxidoreductase (complex I, CI) and ubiquinol-cytochrome c oxidoreductase (cytochrome b-c1 complex, complex III, CIII), resulting in different assemblies (supercomplex SCI(1)III(2)IV(1) and megacomplex MCI(2)III(2)IV(2)). Found in a complex with TMEM177, COA6, COX18, COX20, SCO1 and SCO2. Interacts with TMEM177 in a COX20-dependent manner. Interacts with COX20. Interacts with COX16. The cofactor is Cu cation.

It localises to the mitochondrion inner membrane. It carries out the reaction 4 Fe(II)-[cytochrome c] + O2 + 8 H(+)(in) = 4 Fe(III)-[cytochrome c] + 2 H2O + 4 H(+)(out). In terms of biological role, component of the cytochrome c oxidase, the last enzyme in the mitochondrial electron transport chain which drives oxidative phosphorylation. The respiratory chain contains 3 multisubunit complexes succinate dehydrogenase (complex II, CII), ubiquinol-cytochrome c oxidoreductase (cytochrome b-c1 complex, complex III, CIII) and cytochrome c oxidase (complex IV, CIV), that cooperate to transfer electrons derived from NADH and succinate to molecular oxygen, creating an electrochemical gradient over the inner membrane that drives transmembrane transport and the ATP synthase. Cytochrome c oxidase is the component of the respiratory chain that catalyzes the reduction of oxygen to water. Electrons originating from reduced cytochrome c in the intermembrane space (IMS) are transferred via the dinuclear copper A center (CU(A)) of subunit 2 and heme A of subunit 1 to the active site in subunit 1, a binuclear center (BNC) formed by heme A3 and copper B (CU(B)). The BNC reduces molecular oxygen to 2 water molecules using 4 electrons from cytochrome c in the IMS and 4 protons from the mitochondrial matrix. This chain is Cytochrome c oxidase subunit 2 (MT-CO2), found in Canis adustus (Side-striped jackal).